Consider the following 258-residue polypeptide: Imidazole glycerol phosphate synthase subunit HisF (258 aa).

Residues Asp-12 and Asp-131 contribute to the active site.

The protein belongs to the HisA/HisF family. As to quaternary structure, heterodimer of HisH and HisF.

The protein resides in the cytoplasm. It catalyses the reaction 5-[(5-phospho-1-deoxy-D-ribulos-1-ylimino)methylamino]-1-(5-phospho-beta-D-ribosyl)imidazole-4-carboxamide + L-glutamine = D-erythro-1-(imidazol-4-yl)glycerol 3-phosphate + 5-amino-1-(5-phospho-beta-D-ribosyl)imidazole-4-carboxamide + L-glutamate + H(+). The protein operates within amino-acid biosynthesis; L-histidine biosynthesis; L-histidine from 5-phospho-alpha-D-ribose 1-diphosphate: step 5/9. IGPS catalyzes the conversion of PRFAR and glutamine to IGP, AICAR and glutamate. The HisF subunit catalyzes the cyclization activity that produces IGP and AICAR from PRFAR using the ammonia provided by the HisH subunit. The polypeptide is Imidazole glycerol phosphate synthase subunit HisF (Corynebacterium diphtheriae (strain ATCC 700971 / NCTC 13129 / Biotype gravis)).